The sequence spans 810 residues: RING finger protein unkempt homolog (810 aa).

The segment at 1-24 (MSKGPGPGGSAASSAPPAATAQVL) is disordered. The segment covering 10–19 (SAASSAPPAA) has biased composition (low complexity). C3H1-type zinc fingers lie at residues 84 to 113 (YSPD…HRTT), 124 to 154 (YYKT…HGPH), 215 to 241 (NYKT…HNSK), 251 to 285 (KYRS…HTRT), and 293 to 321 (IYKS…HIEP). The segment at 239–265 (NSKDRRRSPRKHKYRSSPCPNVKHGDE) is disordered. At Ser-240 the chain carries Phosphoserine. The span at 241 to 253 (KDRRRSPRKHKYR) shows a compositional bias: basic residues. Residues Ser-374, Ser-378, Ser-385, and Ser-394 each carry the phosphoserine modification. The segment at 478–497 (TSSLAATPPSPAGTNSTPGM) is disordered. Ser-631 is subject to Phosphoserine. Residues 643–727 (GAAELARLRQ…ERLHTVPEAQ (85 aa)) adopt a coiled-coil conformation. The RING-type; degenerate zinc finger occupies 766–801 (SVKCLKCQEQTRAVLPCQHAVLCELCAEGSECPVCQ).

It belongs to the unkempt family.

The protein localises to the cytoplasm. Functionally, sequence-specific RNA-binding protein which plays an important role in the establishment and maintenance of the early morphology of cortical neurons during embryonic development. Acts as a translation repressor and controls a translationally regulated cell morphology program to ensure proper structuring of the nervous system. Translational control depends on recognition of its binding element within target mRNAs which consists of a mandatory UAG trimer upstream of a U/A-rich motif. Associated with polysomes. The sequence is that of RING finger protein unkempt homolog (Unk) from Mus musculus (Mouse).